We begin with the raw amino-acid sequence, 476 residues long: Lactate utilization protein B (476 aa).

4Fe-4S ferredoxin-type domains follow at residues 304–334 (GTEFQPVLQCIRCAACVNVCPVYRHIGGHSY) and 353–382 (YDDYKELPYASSLCAACTEACPVKIPLHEL). 7 residues coordinate [4Fe-4S] cluster: C313, C316, C319, C323, C366, C369, and C373. Positions 440-476 (KGPGPLKAWTESREFPAPSKERFRDWFQTRQKGGNPS) are disordered. Positions 449-466 (TESREFPAPSKERFRDWF) are enriched in basic and acidic residues. The span at 467–476 (QTRQKGGNPS) shows a compositional bias: polar residues.

The protein belongs to the LutB/YkgF family.

In terms of biological role, is involved in L-lactate degradation and allows cells to grow with lactate as the sole carbon source. Has probably a role as an electron transporter during oxidation of L-lactate. This chain is Lactate utilization protein B, found in Geobacillus kaustophilus (strain HTA426).